The primary structure comprises 459 residues: Anthocyanidin 3-O-glucoside 2''-O-glucosyltransferase (459 aa).

Residue histidine 20 is the Proton acceptor of the active site. Histidine 20 lines the an anthocyanidin pocket. The active-site Charge relay is aspartate 117. Residues threonine 138, valine 335, glutamine 337, histidine 352, tryptophan 355, serine 357, and glutamate 360 each contribute to the UDP-alpha-D-glucose site. Glycine 375 is an an anthocyanidin binding site. 2 residues coordinate UDP-alpha-D-glucose: aspartate 376 and glutamine 377.

The protein belongs to the UDP-glycosyltransferase family.

The catalysed reaction is an anthocyanidin 3-O-beta-D-glucoside + UDP-alpha-D-glucose = an anthocyanidin 3-O-sophoroside + UDP + 2 H(+). It participates in pigment biosynthesis; anthocyanin biosynthesis. Functionally, glycosyltransferase that mediates the glucosylation of anthocyanidin 3-O-glucosides to yield anthocyanidin 3-O-sophorosides. 3-O-sophoroside derivatives are required for the color of flowers. This chain is Anthocyanidin 3-O-glucoside 2''-O-glucosyltransferase (3GGT), found in Ipomoea purpurea (Common morning glory).